We begin with the raw amino-acid sequence, 201 residues long: Glycerol-3-phosphate acyltransferase (201 aa).

A run of 6 helical transmembrane segments spans residues 10 to 30, 60 to 80, 86 to 106, 116 to 136, 139 to 159, and 166 to 186; these read MLIG…GLIL, LAAA…LIAA, AAIA…WIGF, LGVL…AWIV, LLTR…PIAL, and ALAA…RANI.

Belongs to the PlsY family. Probably interacts with PlsX.

Its subcellular location is the cell inner membrane. It carries out the reaction an acyl phosphate + sn-glycerol 3-phosphate = a 1-acyl-sn-glycero-3-phosphate + phosphate. The protein operates within lipid metabolism; phospholipid metabolism. Functionally, catalyzes the transfer of an acyl group from acyl-phosphate (acyl-PO(4)) to glycerol-3-phosphate (G3P) to form lysophosphatidic acid (LPA). This enzyme utilizes acyl-phosphate as fatty acyl donor, but not acyl-CoA or acyl-ACP. This Brucella ovis (strain ATCC 25840 / 63/290 / NCTC 10512) protein is Glycerol-3-phosphate acyltransferase.